The primary structure comprises 429 residues: Enolase (429 aa).

Gln162 contacts (2R)-2-phosphoglycerate. Glu204 acts as the Proton donor in catalysis. Residues Asp242, Glu289, and Asp316 each coordinate Mg(2+). Lys341, Arg370, Ser371, and Lys392 together coordinate (2R)-2-phosphoglycerate. The active-site Proton acceptor is the Lys341.

This sequence belongs to the enolase family. Requires Mg(2+) as cofactor.

Its subcellular location is the cytoplasm. It localises to the secreted. The protein resides in the cell surface. It catalyses the reaction (2R)-2-phosphoglycerate = phosphoenolpyruvate + H2O. It functions in the pathway carbohydrate degradation; glycolysis; pyruvate from D-glyceraldehyde 3-phosphate: step 4/5. Functionally, catalyzes the reversible conversion of 2-phosphoglycerate (2-PG) into phosphoenolpyruvate (PEP). It is essential for the degradation of carbohydrates via glycolysis. The chain is Enolase from Flavobacterium psychrophilum (strain ATCC 49511 / DSM 21280 / CIP 103535 / JIP02/86).